We begin with the raw amino-acid sequence, 441 residues long: CBL-interacting serine/threonine-protein kinase 6 (441 aa).

One can recognise a Protein kinase domain in the interval 24–278; sequence YELGRLLGHG…IEKVMDSPWF (255 aa). ATP is bound by residues 30-38 and lysine 53; that span reads LGHGTFAKV. Aspartate 146 acts as the Proton acceptor in catalysis. The tract at residues 164-193 is activation loop; the sequence is DFGLSAFTEHLKQDGLLHTTCGTPAYVAPE. At serine 168 the chain carries Phosphoserine. Threonine 182 is subject to Phosphothreonine. Positions 310-334 constitute an NAF domain; that stretch reads EETETLNAFHIIALSEGFDLSPLFE. The segment at 341–371 is PPI; it reads KREMRFATSRPASSVISSLEEAARVGNKFDV.

The protein belongs to the protein kinase superfamily. CAMK Ser/Thr protein kinase family. SNF1 subfamily. In terms of assembly, part of a K(+)-channel calcium-sensing kinase/phosphatase complex composed by a calcium sensor CBL (CBL1, CBL2, CBL3 or CBL9), a kinase CIPK (CIPK6, CIPK16 or CIPK23), a phosphatase PP2C (AIP1) and a K(+)-channel (AKT1). Interacts with AKT1, AKT2,CBL1, CBL2, CBL3, CBL4/SOS3 and CBL9. Requires Mn(2+) as cofactor. Autophosphorylated. As to expression, expressed in roots and shoots.

It localises to the endoplasmic reticulum. The enzyme catalyses L-seryl-[protein] + ATP = O-phospho-L-seryl-[protein] + ADP + H(+). The catalysed reaction is L-threonyl-[protein] + ATP = O-phospho-L-threonyl-[protein] + ADP + H(+). Functionally, CIPK serine-threonine protein kinases interact with CBL proteins. Binding of a CBL protein to the regulatory NAF domain of CIPK protein lead to the activation of the kinase in a calcium-dependent manner. Downstream of CBL1, CBL2, CBL3 and CBL9, regulates by phosphorylation the K(+) conductance and uptake of AKT1. Binds to CBL4 to modulate AKT2 activity by promoting a kinase interaction-dependent but phosphorylation-independent translocation of the channel to the plasma membrane. The sequence is that of CBL-interacting serine/threonine-protein kinase 6 (CIPK6) from Arabidopsis thaliana (Mouse-ear cress).